A 366-amino-acid chain; its full sequence is UDP-N-acetylglucosamine--N-acetylmuramyl-(pentapeptide) pyrophosphoryl-undecaprenol N-acetylglucosamine transferase (366 aa).

UDP-N-acetyl-alpha-D-glucosamine-binding positions include 14–16 (TGG), N125, R168, S196, and Q297.

The protein belongs to the glycosyltransferase 28 family. MurG subfamily.

Its subcellular location is the cell inner membrane. The catalysed reaction is di-trans,octa-cis-undecaprenyl diphospho-N-acetyl-alpha-D-muramoyl-L-alanyl-D-glutamyl-meso-2,6-diaminopimeloyl-D-alanyl-D-alanine + UDP-N-acetyl-alpha-D-glucosamine = di-trans,octa-cis-undecaprenyl diphospho-[N-acetyl-alpha-D-glucosaminyl-(1-&gt;4)]-N-acetyl-alpha-D-muramoyl-L-alanyl-D-glutamyl-meso-2,6-diaminopimeloyl-D-alanyl-D-alanine + UDP + H(+). The protein operates within cell wall biogenesis; peptidoglycan biosynthesis. Its function is as follows. Cell wall formation. Catalyzes the transfer of a GlcNAc subunit on undecaprenyl-pyrophosphoryl-MurNAc-pentapeptide (lipid intermediate I) to form undecaprenyl-pyrophosphoryl-MurNAc-(pentapeptide)GlcNAc (lipid intermediate II). This Bradyrhizobium diazoefficiens (strain JCM 10833 / BCRC 13528 / IAM 13628 / NBRC 14792 / USDA 110) protein is UDP-N-acetylglucosamine--N-acetylmuramyl-(pentapeptide) pyrophosphoryl-undecaprenol N-acetylglucosamine transferase.